A 415-amino-acid polypeptide reads, in one-letter code: Probable glucan 1,3-beta-glucosidase A (415 aa).

The N-terminal stretch at 1–22 is a signal peptide; the sequence is MLSRLSQTALVALSLMTVLTEA. Residue glutamate 210 is the Proton donor of the active site. 2 disulfides stabilise this stretch: cysteine 290–cysteine 414 and cysteine 315–cysteine 341. The active-site Nucleophile is glutamate 307. The segment at 335-359 is disordered; sequence SPRYGDCGNKRQGSSSGLSEQERSD.

Belongs to the glycosyl hydrolase 5 (cellulase A) family. As to quaternary structure, monomer. Requires Mn(2+) as cofactor.

It localises to the secreted. The enzyme catalyses Successive hydrolysis of beta-D-glucose units from the non-reducing ends of (1-&gt;3)-beta-D-glucans, releasing alpha-glucose.. Functionally, beta-glucanases participate in the metabolism of beta-glucan, the main structural component of the cell wall. It could also function biosynthetically as a transglycosylase. This Aspergillus clavatus (strain ATCC 1007 / CBS 513.65 / DSM 816 / NCTC 3887 / NRRL 1 / QM 1276 / 107) protein is Probable glucan 1,3-beta-glucosidase A (exgA).